The following is a 201-amino-acid chain: Peptide deformylase (201 aa).

2 residues coordinate Fe cation: Cys121 and His163. Residue Glu164 is part of the active site. His167 lines the Fe cation pocket.

The protein belongs to the polypeptide deformylase family. Fe(2+) serves as cofactor.

The enzyme catalyses N-terminal N-formyl-L-methionyl-[peptide] + H2O = N-terminal L-methionyl-[peptide] + formate. Removes the formyl group from the N-terminal Met of newly synthesized proteins. Requires at least a dipeptide for an efficient rate of reaction. N-terminal L-methionine is a prerequisite for activity but the enzyme has broad specificity at other positions. This Parasynechococcus marenigrum (strain WH8102) protein is Peptide deformylase.